The following is a 287-amino-acid chain: Xyloglucan endotransglucosylase protein 1 (287 aa).

The signal sequence occupies residues 1–28; that stretch reads MAFMSFINGFSTLFLVALLASSMMAAKG. Residues 29 to 219 form the GH16 domain; that stretch reads GNFYQDFDVT…WTKAPFTAYY (191 aa). Glutamate 105 serves as the catalytic Nucleophile. Glutamate 109 serves as the catalytic Proton donor. A xyloglucan-binding site is contributed by glutamate 109. A glycan (N-linked (GlcNAc...) asparagine) is linked at asparagine 113. Residues 122–124, 132–134, 198–199, and glycine 203 contribute to the xyloglucan site; these read HTN, NRE, and DW. Intrachain disulfides connect cysteine 227/cysteine 231 and cysteine 266/cysteine 280. Arginine 271 is a binding site for xyloglucan.

This sequence belongs to the glycosyl hydrolase 16 family. XTH group 2 subfamily. In terms of processing, contains at least one intrachain disulfide bond essential for its enzymatic activity. As to expression, expressed in fruit pulp. Expressed in leaves, flowers, calyces, stems and fruits. Highest expression in leaves and lowest in fruits.

It is found in the secreted. Its subcellular location is the cell wall. It localises to the extracellular space. The protein resides in the apoplast. The catalysed reaction is breaks a beta-(1-&gt;4) bond in the backbone of a xyloglucan and transfers the xyloglucanyl segment on to O-4 of the non-reducing terminal glucose residue of an acceptor, which can be a xyloglucan or an oligosaccharide of xyloglucan.. Catalyzes xyloglucan endotransglycosylation (XET). Cleaves and religates xyloglucan polymers. Does not catalyze xyloglucan endohydrolysis (XEH). Overexpression in Arabidopsis transgenic plants results in elevated tolerance to abiotic stress, such as salt, ABA (abscisic acid) and drought stresses, and in the production of wider leaves. Overexpression in transgenic tomato plants slows down fruit ripening and softening, and the plants produce larger fruits. Both transgenic plants have larger and more irregular cells. Moreover, the fruits of the transgenic tomato have higher density of cell wall and intercellular spaces. May provide cells with more strength and thickness to maintain structural integrity. Probably involved in cell wall assembly and synthesis in fast growing tissues and in the maintenance of firmness in mature fruits. The chain is Xyloglucan endotransglucosylase protein 1 from Diospyros kaki (Kaki persimmon).